The sequence spans 151 residues: Large ribosomal subunit protein bL9 (151 aa).

It belongs to the bacterial ribosomal protein bL9 family.

Functionally, binds to the 23S rRNA. The chain is Large ribosomal subunit protein bL9 from Lactobacillus delbrueckii subsp. bulgaricus (strain ATCC BAA-365 / Lb-18).